The following is a 215-amino-acid chain: MPSYTLHYFNHRGRAEICRMLFAAAGVQYNDRRIESSEWNGMRNQMPCNMMPMLELDNRTQIPQSMAMARYLAREFGYHGKSNMEMARVDFISDCFYDIMDDYMRMYQDGNCRMMFQRSRDMNSSSESRMRFQETCRRILPFMERTLDMHSGGSKFFMGDQMTMADMMCYCALENPLMEESSMLSSYPKLMSLRNRVMSHPKMCNYLKKRCRTDF.

Positions 2–80 (PSYTLHYFNH…YLAREFGYHG (79 aa)) constitute a GST N-terminal domain. Residues 82 to 215 (SNMEMARVDF…YLKKRCRTDF (134 aa)) form the GST C-terminal domain.

Belongs to the GST superfamily. Lens.

S-crystallins are structural components of squids and octopi eye lens. Contains relatively little if any GST activity. The polypeptide is S-crystallin 3 (Enteroctopus dofleini (North Pacific giant octopus)).